Here is a 301-residue protein sequence, read N- to C-terminus: Ornithine carbamoyltransferase (301 aa).

Carbamoyl phosphate-binding positions include Arg-107 and 134 to 137 (HPLQ). L-ornithine is bound by residues Asn-165, Asp-220, and 224–225 (SM). Carbamoyl phosphate is bound by residues 260–261 (CL) and Arg-288.

The protein belongs to the aspartate/ornithine carbamoyltransferase superfamily. OTCase family. As to quaternary structure, homotrimer.

It localises to the cytoplasm. It carries out the reaction carbamoyl phosphate + L-ornithine = L-citrulline + phosphate + H(+). The protein operates within amino-acid biosynthesis; L-arginine biosynthesis; L-arginine from L-ornithine and carbamoyl phosphate: step 1/3. Its activity is regulated as follows. Inhibited by delta-N-phosphonoacetyl-L-ornithine. Its function is as follows. Reversibly catalyzes the transfer of the carbamoyl group from carbamoyl phosphate (CP) to the N(epsilon) atom of ornithine (ORN) to produce L-citrulline, which is a substrate for argininosuccinate synthetase, the enzyme involved in the final step in arginine biosynthesis. In Thermus thermophilus (strain ATCC BAA-163 / DSM 7039 / HB27), this protein is Ornithine carbamoyltransferase.